The following is a 330-amino-acid chain: FKBP12-interacting protein of 37 kDa (330 aa).

Position 1 is an N-acetylmethionine (Met1). Residues 1–12 (MEFSSQDDDFGG) show a composition bias toward acidic residues. The tract at residues 1-43 (MEFSSQDDDFGGDDSAANATRASGNRRSFGDLEDDEDDIFGST) is disordered. The segment covering 17–26 (ANATRASGNR) has biased composition (polar residues). Residues 56 to 308 (SLRGSLKNCK…KGLEIVSELV (253 aa)) are a coiled coil.

This sequence belongs to the fl(2)d family. In terms of assembly, forms homodimers. Interacts with MTA/EMB1706. Interacts with FKBP12; interaction is inhibited by the immunosuppressive drug FK506. Interacts with VIR. Associates with MTA, MTB, VIR and HAKAI to form the m6A writer complex which is essential for adenosine methylation at specific mRNA sequences. As to expression, ubiquitously expressed with higher levels in primary and lateral roots, leaves, trichomes, and in pollen grains (at protein level).

It is found in the nucleus speckle. Its subcellular location is the nucleus. The protein resides in the nucleoplasm. In terms of biological role, probable regulatory subunit of the N6-methyltransferase complex, a multiprotein complex that mediates N6-methyladenosine (m6A) methylation at the 5'-[AG]GAC-3' consensus sites of some mRNAs. Associates with MTA, MTB, VIR and HAKAI to form the m6A writer complex which is essential for adenosine methylation at specific mRNA sequences. N6-methyladenosine (m6A) plays a role in mRNA stability, processing, translation efficiency and editing. Essential protein required during endosperm development and embryogenesis. Involved in endoreduplication, especially in trichomes. May play a role in splicing events. In Arabidopsis thaliana (Mouse-ear cress), this protein is FKBP12-interacting protein of 37 kDa.